Consider the following 637-residue polypeptide: Chaperone protein DnaK (637 aa).

Thr-196 is subject to Phosphothreonine; by autocatalysis. Disordered regions lie at residues Ala-503 to Glu-525 and Ser-598 to Lys-637. Over residues Ser-598–Ser-619 the composition is skewed to low complexity.

It belongs to the heat shock protein 70 family.

In terms of biological role, acts as a chaperone. The polypeptide is Chaperone protein DnaK (Chlorobium chlorochromatii (strain CaD3)).